The primary structure comprises 72 residues: Translation initiation factor IF-1 (72 aa).

The S1-like domain maps to 1 to 72; sequence MSKEDAIEVM…TRGRIVYRYK (72 aa).

This sequence belongs to the IF-1 family. In terms of assembly, component of the 30S ribosomal translation pre-initiation complex which assembles on the 30S ribosome in the order IF-2 and IF-3, IF-1 and N-formylmethionyl-tRNA(fMet); mRNA recruitment can occur at any time during PIC assembly.

The protein resides in the cytoplasm. In terms of biological role, one of the essential components for the initiation of protein synthesis. Stabilizes the binding of IF-2 and IF-3 on the 30S subunit to which N-formylmethionyl-tRNA(fMet) subsequently binds. Helps modulate mRNA selection, yielding the 30S pre-initiation complex (PIC). Upon addition of the 50S ribosomal subunit IF-1, IF-2 and IF-3 are released leaving the mature 70S translation initiation complex. This is Translation initiation factor IF-1 from Koribacter versatilis (strain Ellin345).